Reading from the N-terminus, the 203-residue chain is Outer-membrane lipoprotein carrier protein (203 aa).

The signal sequence occupies residues 1-21 (MKKMAIACALLSSVVASSVWA). The tract at residues 178–203 (QQNGAVDPSKFTFTPPQGVTIDDQRK) is disordered.

This sequence belongs to the LolA family. As to quaternary structure, monomer.

The protein resides in the periplasm. Functionally, participates in the translocation of lipoproteins from the inner membrane to the outer membrane. Only forms a complex with a lipoprotein if the residue after the N-terminal Cys is not an aspartate (The Asp acts as a targeting signal to indicate that the lipoprotein should stay in the inner membrane). This Salmonella paratyphi A (strain ATCC 9150 / SARB42) protein is Outer-membrane lipoprotein carrier protein.